Reading from the N-terminus, the 101-residue chain is Small ribosomal subunit protein uS14 (101 aa).

It belongs to the universal ribosomal protein uS14 family. In terms of assembly, part of the 30S ribosomal subunit. Contacts proteins S3 and S10.

Binds 16S rRNA, required for the assembly of 30S particles and may also be responsible for determining the conformation of the 16S rRNA at the A site. This Acinetobacter baumannii (strain SDF) protein is Small ribosomal subunit protein uS14.